The sequence spans 255 residues: Cysteine protease avirulence protein AvrRpt2 (255 aa).

A disordered region spans residues 1 to 50; that stretch reads MKIAPVAINHSPLSREVPSHAAPTQAKQTNLQSEAGDLDARKSSASSPET. The propeptide at 1 to 71 is removed in mature form; the sequence is MKIAPVAINH…RHKIEVPAFG (71 aa). Residues 70–71 are determinants of cleavage specificity; that stretch reads FG. Residues 76 to 100 form a disordered region; it reads KKSSKHETGGSSANADSSSVASDST. The segment covering 86–98 has biased composition (low complexity); sequence SSANADSSSVASD. Catalysis depends on C122, which acts as the Nucleophile. Residues H208 and D226 contribute to the active site.

The protein belongs to the peptidase C70 family. As to quaternary structure, interacts physically with plant cell ROC1 (Arabidopsis single-domain cyclophilin) and RIN4. In terms of processing, autocleaved inside plant cells upon activation by cyclophilin. Cleavage is crucial in subcellular location and in eliciting HR. Inhibited by cyclosporin A (cyclophilin inhibitor).

The protein resides in the secreted. It is found in the host cell membrane. Its function is as follows. Effector protein involved in gene-for-gene resistance in plants expressing RPS2. Its thiol protease activity is required for the degradation of plant cell RIN4 and consequent activation of RPS2 during bacterial infection. The activation of RPS2 is sufficient for the induction of hypersensitive response (HR) and plant resistance. Cleavage of RIN4 by AvrRpt2 also interferes with RPM1-mediated resistance activated by either AvrRpm1 or AvrB. Contributes to virulence in plants lacking the resistance protein RPS2 promoting pathogen growth and disease symptoms. Inhibits PAMP (pathogen-associated molecular patterns)-induced signaling compromising the host's basal defense system. Blocks plant callose deposition, flg22 (a peptide corresponding to the most conserved domain of flagellin) induced accumulation of PR-1, PR-2 and PR-5 and activation of GST6 transcription. The mechanism of virulence is unknown, but this activity is independent of ethylene and salicylic acid response pathways and independent of RIN4 disappearance. The protein is Cysteine protease avirulence protein AvrRpt2 (avrRpt2) of Pseudomonas syringae pv. tomato.